A 372-amino-acid chain; its full sequence is Probable leucine aminopeptidase MCYG_03459 (372 aa).

Positions 1-18 (MKISTLAVVSAFAVTAIA) are cleaved as a signal peptide. N95 is a glycosylation site (N-linked (GlcNAc...) asparagine). The Zn(2+) site is built by H175 and D194. N195 and N219 each carry an N-linked (GlcNAc...) asparagine glycan. Zn(2+) contacts are provided by E233 and D260. C305 and C309 are joined by a disulfide. H338 lines the Zn(2+) pocket.

This sequence belongs to the peptidase M28 family. M28E subfamily. Monomer. It depends on Zn(2+) as a cofactor.

It is found in the secreted. Functionally, probable extracellular aminopeptidase which contributes to pathogenicity. The chain is Probable leucine aminopeptidase MCYG_03459 from Arthroderma otae (strain ATCC MYA-4605 / CBS 113480) (Microsporum canis).